Here is a 121-residue protein sequence, read N- to C-terminus: Succinate dehydrogenase assembly factor 3, mitochondrial (121 aa).

The N-terminal 35 residues, 1–35 (MRPSLVRLVRPRRPERKTSPILPPLKLYKALLRAH), are a transit peptide targeting the mitochondrion.

The protein belongs to the complex I LYR family. SDHAF3 subfamily. Interacts with the iron-sulfur protein subunit within the SDH catalytic dimer.

The protein resides in the mitochondrion matrix. Functionally, plays an essential role in the assembly of succinate dehydrogenase (SDH), an enzyme complex (also referred to as respiratory complex II) that is a component of both the tricarboxylic acid (TCA) cycle and the mitochondrial electron transport chain, and which couples the oxidation of succinate to fumarate with the reduction of ubiquinone (coenzyme Q) to ubiquinol. Promotes maturation of the iron-sulfur protein subunit of the SDH catalytic dimer, protecting it from the deleterious effects of oxidants. May act together with SDHAF1. The sequence is that of Succinate dehydrogenase assembly factor 3, mitochondrial from Debaryomyces hansenii (strain ATCC 36239 / CBS 767 / BCRC 21394 / JCM 1990 / NBRC 0083 / IGC 2968) (Yeast).